The chain runs to 371 residues: N-acetyldiaminopimelate deacetylase (371 aa).

Asp-68 is a catalytic residue. Glu-127 acts as the Proton acceptor in catalysis.

This sequence belongs to the peptidase M20A family. N-acetyldiaminopimelate deacetylase subfamily.

It catalyses the reaction N-acetyl-(2S,6S)-2,6-diaminopimelate + H2O = (2S,6S)-2,6-diaminopimelate + acetate. It functions in the pathway amino-acid biosynthesis; L-lysine biosynthesis via DAP pathway; LL-2,6-diaminopimelate from (S)-tetrahydrodipicolinate (acetylase route): step 3/3. Functionally, catalyzes the conversion of N-acetyl-diaminopimelate to diaminopimelate and acetate. The protein is N-acetyldiaminopimelate deacetylase of Listeria welshimeri serovar 6b (strain ATCC 35897 / DSM 20650 / CCUG 15529 / CIP 8149 / NCTC 11857 / SLCC 5334 / V8).